A 233-amino-acid polypeptide reads, in one-letter code: Transcriptional regulatory protein WalR (233 aa).

The Response regulatory domain maps to 4–117 (KVVVVDDEKP…ELIARVKANL (114 aa)). The residue at position 53 (Asp-53) is a 4-aspartylphosphate. Residues 132–231 (TNEITIKDIV…RRGVGYFLQQ (100 aa)) constitute a DNA-binding region (ompR/PhoB-type).

Phosphorylated by WalK.

It is found in the cytoplasm. Functionally, member of the two-component regulatory system WalK/WalR. The chain is Transcriptional regulatory protein WalR (walR) from Staphylococcus haemolyticus (strain JCSC1435).